A 214-amino-acid polypeptide reads, in one-letter code: Pyridoxine/pyridoxamine 5'-phosphate oxidase (214 aa).

Residues 9-12 (RKDY) and lysine 67 each bind substrate. FMN contacts are provided by residues 62–67 (RMVLLK), 77–78 (FT), arginine 83, lysine 84, and glutamine 106. Residues tyrosine 124, arginine 128, and serine 132 each contribute to the substrate site. FMN-binding positions include 141-142 (QS) and tryptophan 186. 192 to 194 (RLH) is a binding site for substrate. Position 196 (arginine 196) interacts with FMN.

This sequence belongs to the pyridoxamine 5'-phosphate oxidase family. Homodimer. Requires FMN as cofactor.

It carries out the reaction pyridoxamine 5'-phosphate + O2 + H2O = pyridoxal 5'-phosphate + H2O2 + NH4(+). It catalyses the reaction pyridoxine 5'-phosphate + O2 = pyridoxal 5'-phosphate + H2O2. The protein operates within cofactor metabolism; pyridoxal 5'-phosphate salvage; pyridoxal 5'-phosphate from pyridoxamine 5'-phosphate: step 1/1. It functions in the pathway cofactor metabolism; pyridoxal 5'-phosphate salvage; pyridoxal 5'-phosphate from pyridoxine 5'-phosphate: step 1/1. Functionally, catalyzes the oxidation of either pyridoxine 5'-phosphate (PNP) or pyridoxamine 5'-phosphate (PMP) into pyridoxal 5'-phosphate (PLP). In Trichormus variabilis (strain ATCC 29413 / PCC 7937) (Anabaena variabilis), this protein is Pyridoxine/pyridoxamine 5'-phosphate oxidase.